The following is a 362-amino-acid chain: MSPTATVQLTDDTAKRFEGHAKLLAIGTATPTNWVDQATYPDFYFRITNSEHLLEHKEKFRRICNKSKIRKRHLVLTKELLKKNPNLCTYNDASLNTRQDILVSEVPKLGKEAAMKAIKEWGRPISEITHLVFCTTSGVDMPGADFQLTKLLGLNSSVKRLMMYQQGCNAGAAMLRLVKDLAENNKGARVLVVCSEITINIFRGPSLEQDDNLLAQCLFGDGSAAMIVGKDPRPGLETPLFELVSSAQTIVPNTDSHLKLHLREMGLTFHCSRAVPSVLAENVEDCLVKAFEPYGISDWNSIFWVFHPGGNAIVDRVEERLGLGPERLRASRDVLSEYGNLTSACVLFILDEMRKKSKKDEQ.

Residue cysteine 168 is part of the active site.

It belongs to the thiolase-like superfamily. Chalcone/stilbene synthases family.

It catalyses the reaction (E)-4-coumaroyl-CoA + 3 malonyl-CoA + 3 H(+) = 2',4,4',6'-tetrahydroxychalcone + 3 CO2 + 4 CoA. The protein operates within secondary metabolite biosynthesis; flavonoid biosynthesis. Its function is as follows. The primary product of this enzyme is 4,2',4',6'-tetrahydroxychalcone (also termed naringenin-chalcone or chalcone) which can under specific conditions spontaneously isomerize into naringenin. This is Chalcone synthase A (CHSA) from Ipomoea trifida (Morning glory).